A 247-amino-acid chain; its full sequence is MTISNRILLGVNIDHVATLRQARGTRYPDPVKAALDAEEAGADGITVHLREDRRHIQERDVLLLKDVLQTRMNFEMGVTEEMMAFAERIRPAHICLVPETRQELTTEGGLDVAGQEERIRAAVERLSKIGSEVSLFIDADERQIAASKRVGAPAIELHTGRYADAETPSEVAEELKRVADGVAFGLAQGLIVNAGHGLHYHNVEAVAAIKGINELNIGHALVAHALFVGFKSAVSEMKTLILAAARH.

N12 serves as a coordination point for 3-amino-2-oxopropyl phosphate. 14-15 (DH) contacts 1-deoxy-D-xylulose 5-phosphate. R23 is a binding site for 3-amino-2-oxopropyl phosphate. The active-site Proton acceptor is the H48. 1-deoxy-D-xylulose 5-phosphate is bound by residues R50 and H55. E75 (proton acceptor) is an active-site residue. T105 lines the 1-deoxy-D-xylulose 5-phosphate pocket. The Proton donor role is filled by H196. 3-amino-2-oxopropyl phosphate contacts are provided by residues G197 and 218–219 (GH).

It belongs to the PNP synthase family. As to quaternary structure, homooctamer; tetramer of dimers.

It is found in the cytoplasm. The enzyme catalyses 3-amino-2-oxopropyl phosphate + 1-deoxy-D-xylulose 5-phosphate = pyridoxine 5'-phosphate + phosphate + 2 H2O + H(+). It participates in cofactor biosynthesis; pyridoxine 5'-phosphate biosynthesis; pyridoxine 5'-phosphate from D-erythrose 4-phosphate: step 5/5. Catalyzes the complicated ring closure reaction between the two acyclic compounds 1-deoxy-D-xylulose-5-phosphate (DXP) and 3-amino-2-oxopropyl phosphate (1-amino-acetone-3-phosphate or AAP) to form pyridoxine 5'-phosphate (PNP) and inorganic phosphate. This chain is Pyridoxine 5'-phosphate synthase, found in Pseudomonas fluorescens (strain Pf0-1).